A 366-amino-acid chain; its full sequence is Sodium-potassium/proton antiporter ChaA (366 aa).

At 1–16 (MSNAQEAVKTRHKETS) the chain is on the cytoplasmic side. 2 helical membrane-spanning segments follow: residues 17–37 (LIFP…QTLP) and 38–58 (VVIA…FSVV). Residues 59-74 (RHADVLAHRLGEPYGS) are Cytoplasmic-facing. A helical transmembrane segment spans residues 75–95 (LILSLSVVILEVSLISALMAT). At 96-106 (GDAAPTLMRDT) the chain is on the periplasmic side. A helical membrane pass occupies residues 107 to 127 (LYSIIMIVTGGLVGFSLLLGG). Residues 128–143 (RKFATQYMNLFGIKQY) lie on the Cytoplasmic side of the membrane. A helical membrane pass occupies residues 144 to 164 (LIALFPLAIIVLVFPMALPAA). Residues 165–167 (NFS) are Periplasmic-facing. The chain crosses the membrane as a helical span at residues 168 to 188 (TGQALLVALISAAMYGVFLLI). Residues 189 to 216 (QTKTHQSLFVYEHEDDSDDDDPHHGKPS) are Cytoplasmic-facing. A helical transmembrane segment spans residues 217–237 (AHSSLWHAIWLIIHLIAVIAV). At 238-255 (TKMNASSLETLLDSMNAP) the chain is on the periplasmic side. The chain crosses the membrane as a helical span at residues 256-276 (VAFTGFLVALLILSPEGLGAL). The Cytoplasmic portion of the chain corresponds to 277–290 (KAVLNNQVQRAMNL). A helical transmembrane segment spans residues 291-311 (FFGSVLATISLTVPVVTLIAF). At 312–318 (MTGNELQ) the chain is on the periplasmic side. A helical transmembrane segment spans residues 319–339 (FALGAPEMVVMVASLVLCHIS). Residues 340–345 (FSTGRT) are Cytoplasmic-facing. Residues 346 to 366 (NVLNGAAHLALFAAYLMTIFA) form a helical membrane-spanning segment.

It belongs to the Ca(2+):cation antiporter (CaCA) (TC 2.A.19) family.

Its subcellular location is the cell inner membrane. It carries out the reaction Na(+)(in) + H(+)(out) = Na(+)(out) + H(+)(in). It catalyses the reaction K(+)(in) + H(+)(out) = K(+)(out) + H(+)(in). The enzyme catalyses Ca(2+)(in) + H(+)(out) = Ca(2+)(out) + H(+)(in). Pronounced pH dependence with sodium as substrate. Ca(2+)/H(+) and Na(+)/H(+) antiporter activities are both inhibited by magnesium. Ca(2+)/H(+) activity is inhibited by the proton ionophore carbonyl cyanide m-chlorophenylhydrazone (CCCP). Functionally, sodium exporter that functions mainly at alkaline pH. Can also function as a potassium/proton and calcium/proton antiporter at alkaline pH. Does not play a major role in calcium export. The K(+)/H(+) antiporter activity may enable E.coli to adapt to K(+) salinity stress and to maintain K(+) homeostasis. In Escherichia coli (strain K12), this protein is Sodium-potassium/proton antiporter ChaA.